Consider the following 880-residue polypeptide: Leucine--tRNA ligase (880 aa).

Positions P49–H59 match the 'HIGH' region motif. The 'KMSKS' region motif lies at K638 to S642. K641 contacts ATP.

This sequence belongs to the class-I aminoacyl-tRNA synthetase family.

The protein localises to the cytoplasm. It catalyses the reaction tRNA(Leu) + L-leucine + ATP = L-leucyl-tRNA(Leu) + AMP + diphosphate. In Bartonella quintana (strain Toulouse) (Rochalimaea quintana), this protein is Leucine--tRNA ligase.